The chain runs to 306 residues: Ornithine carbamoyltransferase (306 aa).

Carbamoyl phosphate-binding positions include 50-53, glutamine 77, arginine 101, and 128-131; these read STRT and HPCQ. Residues asparagine 160, aspartate 224, and 228 to 229 each bind L-ornithine; that span reads SM. Residues 264-265 and arginine 292 each bind carbamoyl phosphate; that span reads CL.

Belongs to the aspartate/ornithine carbamoyltransferase superfamily. OTCase family.

The protein localises to the cytoplasm. It carries out the reaction carbamoyl phosphate + L-ornithine = L-citrulline + phosphate + H(+). It participates in amino-acid biosynthesis; L-arginine biosynthesis; L-arginine from L-ornithine and carbamoyl phosphate: step 1/3. Reversibly catalyzes the transfer of the carbamoyl group from carbamoyl phosphate (CP) to the N(epsilon) atom of ornithine (ORN) to produce L-citrulline. In Mycobacterium leprae (strain TN), this protein is Ornithine carbamoyltransferase.